A 236-amino-acid polypeptide reads, in one-letter code: Alpha-acetolactate decarboxylase (236 aa).

This sequence belongs to the alpha-acetolactate decarboxylase family.

It carries out the reaction (2S)-2-acetolactate + H(+) = (R)-acetoin + CO2. It participates in polyol metabolism; (R,R)-butane-2,3-diol biosynthesis; (R,R)-butane-2,3-diol from pyruvate: step 2/3. Converts acetolactate into acetoin. The polypeptide is Alpha-acetolactate decarboxylase (aldB) (Lactococcus lactis subsp. lactis (strain IL1403) (Streptococcus lactis)).